Consider the following 268-residue polypeptide: Interleukin-1 alpha (268 aa).

Positions 1–112 are excised as a propeptide; sequence MAKVPDLFED…NTEEEIIKPR (112 aa). K82 carries the post-translational modification N6-acetyllysine. A nuclear localization signal (NLS) region spans residues 82-86; the sequence is KKRRL. Residue S87 is modified to Phosphoserine. Residues N102 and N141 are each glycosylated (N-linked (GlcNAc...) asparagine).

It belongs to the IL-1 family. As to quaternary structure, monomer. Interacts with TMED10; the interaction mediates the translocation from the cytoplasm into the ERGIC (endoplasmic reticulum-Golgi intermediate compartment) and thereby secretion. Interacts with IL1R1. Interacts with S100A13; this interaction is the first step in the export of IL1A, followed by direct translocation of this complex across the plasma membrane. Post-translationally, acetylated within its nuclear localization sequence, which impacts subcellular localization. In terms of processing, proteolytic processed by CAPN1 in a calcium-dependent manner. Cleavage from 31 kDa precursor to 18 kDa biologically active molecules. Phosphorylated. Phosphorylation greatly enhances susceptibility to digestion and promotes the conversion of pre-IL1A alpha to the biologically active IL1A.

It localises to the nucleus. Its subcellular location is the cytoplasm. It is found in the secreted. In terms of biological role, cytokine constitutively present intracellularly in nearly all resting non-hematopoietic cells that plays an important role in inflammation and bridges the innate and adaptive immune systems. After binding to its receptor IL1R1 together with its accessory protein IL1RAP, forms the high affinity interleukin-1 receptor complex. Signaling involves the recruitment of adapter molecules such as MYD88, IRAK1 or IRAK4. In turn, mediates the activation of NF-kappa-B and the three MAPK pathways p38, p42/p44 and JNK pathways. Within the cell, acts as an alarmin and cell death results in its liberation in the extracellular space after disruption of the cell membrane to induce inflammation and alert the host to injury or damage. In addition to its role as a danger signal, which occurs when the cytokine is passively released by cell necrosis, directly senses DNA damage and acts as signal for genotoxic stress without loss of cell integrity. This chain is Interleukin-1 alpha (IL1A), found in Bos taurus (Bovine).